Consider the following 358-residue polypeptide: Chorismate synthase (358 aa).

Arg-48 and Arg-54 together coordinate NADP(+). FMN is bound by residues 125-127 (RSS), Gly-282, 297-301 (KPPAS), and Arg-323.

It belongs to the chorismate synthase family. As to quaternary structure, homotetramer. FMNH2 is required as a cofactor.

The catalysed reaction is 5-O-(1-carboxyvinyl)-3-phosphoshikimate = chorismate + phosphate. It participates in metabolic intermediate biosynthesis; chorismate biosynthesis; chorismate from D-erythrose 4-phosphate and phosphoenolpyruvate: step 7/7. In terms of biological role, catalyzes the anti-1,4-elimination of the C-3 phosphate and the C-6 proR hydrogen from 5-enolpyruvylshikimate-3-phosphate (EPSP) to yield chorismate, which is the branch point compound that serves as the starting substrate for the three terminal pathways of aromatic amino acid biosynthesis. This reaction introduces a second double bond into the aromatic ring system. The sequence is that of Chorismate synthase from Roseiflexus castenholzii (strain DSM 13941 / HLO8).